Consider the following 218-residue polypeptide: Probable GTP-binding protein EngB (218 aa).

Residues 31–205 (SGIEIAFAGR…EQKVTSWYAQ (175 aa)) form the EngB-type G domain. Residues 39 to 46 (GRSNAGKS), 66 to 70 (GRTQL), 84 to 87 (DLPG), 151 to 154 (TKAD), and 184 to 186 (FSS) contribute to the GTP site. Mg(2+) contacts are provided by Ser46 and Thr68.

Belongs to the TRAFAC class TrmE-Era-EngA-EngB-Septin-like GTPase superfamily. EngB GTPase family. Requires Mg(2+) as cofactor.

Its function is as follows. Necessary for normal cell division and for the maintenance of normal septation. The chain is Probable GTP-binding protein EngB from Psychromonas ingrahamii (strain DSM 17664 / CCUG 51855 / 37).